A 304-amino-acid polypeptide reads, in one-letter code: tRNA pseudouridine synthase B (304 aa).

Asp-47 functions as the Nucleophile in the catalytic mechanism. The disordered stretch occupies residues 85 to 105; sequence TNTDDGEGEVTETSDARPSDD.

This sequence belongs to the pseudouridine synthase TruB family. Type 1 subfamily.

It carries out the reaction uridine(55) in tRNA = pseudouridine(55) in tRNA. In terms of biological role, responsible for synthesis of pseudouridine from uracil-55 in the psi GC loop of transfer RNAs. The chain is tRNA pseudouridine synthase B from Dinoroseobacter shibae (strain DSM 16493 / NCIMB 14021 / DFL 12).